A 370-amino-acid chain; its full sequence is Uroporphyrinogen decarboxylase (370 aa).

Substrate-binding positions include 29–33, D79, Y155, S210, and H342; that span reads RQAGR.

It belongs to the uroporphyrinogen decarboxylase family. As to quaternary structure, homodimer.

The protein localises to the cytoplasm. It catalyses the reaction uroporphyrinogen III + 4 H(+) = coproporphyrinogen III + 4 CO2. Its pathway is porphyrin-containing compound metabolism; protoporphyrin-IX biosynthesis; coproporphyrinogen-III from 5-aminolevulinate: step 4/4. Functionally, catalyzes the decarboxylation of four acetate groups of uroporphyrinogen-III to yield coproporphyrinogen-III. The protein is Uroporphyrinogen decarboxylase of Variovorax paradoxus (strain S110).